The chain runs to 276 residues: Aurora kinase C (276 aa).

Residues 16–266 (FEIGRPLGRG…LAQVLKHPWV (251 aa)) form the Protein kinase domain. Residues 22 to 30 (LGRGKFGRV) and Lys45 each bind ATP. Residue Asp139 is the Proton acceptor of the active site. Thr171 bears the Phosphothreonine; by PKA mark.

It belongs to the protein kinase superfamily. Ser/Thr protein kinase family. Aurora subfamily. As to quaternary structure, component of the chromosomal passenger complex (CPC) composed of at least BIRC5/survivin, CDCA8/borealin, INCENP, AURKB or AURKC; predominantly independent AURKB- and AURKC-containing complexes exist; in the complex interacts directly with BIRC5/survivin and INCENP. Interacts with TACC1. In terms of tissue distribution, expressed only in testis.

It localises to the nucleus. The protein localises to the chromosome. The protein resides in the centromere. Its subcellular location is the cytoplasm. It is found in the cytoskeleton. It localises to the spindle. The enzyme catalyses L-seryl-[protein] + ATP = O-phospho-L-seryl-[protein] + ADP + H(+). It carries out the reaction L-threonyl-[protein] + ATP = O-phospho-L-threonyl-[protein] + ADP + H(+). With respect to regulation, okadaic acid, an inhibitor of protein phosphatase 1 (PP1), protein phosphatase 2A (PP2A) and protein phosphatase 5 (PP5), increases AURKC activity. AURKC is also stabilized through its interaction with INCENP, which also acts as an activator. Serine/threonine-protein kinase component of the chromosomal passenger complex (CPC), a complex that acts as a key regulator of mitosis. The CPC complex has essential functions at the centromere in ensuring correct chromosome alignment and segregation and is required for chromatin-induced microtubule stabilization and spindle assembly. Also plays a role in meiosis and more particularly in spermatogenesis. Has redundant cellular functions with AURKB and can rescue an AURKB knockdown. Like AURKB, AURKC phosphorylates histone H3 at 'Ser-10' and 'Ser-28'. AURKC phosphorylates the CPC complex subunits BIRC5/survivin and INCENP leading to increased AURKC activity. Phosphorylates TACC1, another protein involved in cell division, at 'Ser-228'. This chain is Aurora kinase C (Aurkc), found in Mus musculus (Mouse).